A 260-amino-acid polypeptide reads, in one-letter code: Uroplakin-1b (260 aa).

Residues 1–12 (MAKDDSSVRCFQ) are Cytoplasmic-facing. Residues 13-38 (GLLIFGNVIVGMCGIALTAECIFFVS) form a helical membrane-spanning segment. The Extracellular portion of the chain corresponds to 39–60 (DQHSLYPLLEATDNDDIYGAAW). A helical transmembrane segment spans residues 61–81 (IGMFVGICLFCLSVLGIVGIM). Residues 82 to 86 (KSNRK) lie on the Cytoplasmic side of the membrane. A helical transmembrane segment spans residues 87-107 (ILLAYFILMFIVYGFEVASCI). Residues 108-229 (TAATQRDFFT…ELISGPMNRH (122 aa)) are Extracellular-facing. Residues 230–250 (AWGVAWFGFAILCWTFWVLLG) form a helical membrane-spanning segment. Over 251–260 (TMFYWSRIEY) the chain is Cytoplasmic.

Belongs to the tetraspanin (TM4SF) family. As to quaternary structure, heterodimer with uroplakin-3A (UPK3A) or uroplakin-3B (UPK3B).

It is found in the membrane. Its function is as follows. Component of the asymmetric unit membrane (AUM); a highly specialized biomembrane elaborated by terminally differentiated urothelial cells. This is Uroplakin-1b (UPK1B) from Neovison vison (American mink).